A 509-amino-acid polypeptide reads, in one-letter code: Glutamyl-tRNA(Gln) amidotransferase subunit A (509 aa).

Residues K75 and S150 each act as charge relay system in the active site. Catalysis depends on S174, which acts as the Acyl-ester intermediate. Positions 471 to 509 (DWHKRRPPLGQPPLEQAQGTAQQPKAKSKSTKGSKKSKS) are disordered. Residues 496–509 (AKSKSTKGSKKSKS) are compositionally biased toward basic residues.

The protein belongs to the amidase family. GatA subfamily. Heterotrimer of A, B and C subunits.

The catalysed reaction is L-glutamyl-tRNA(Gln) + L-glutamine + ATP + H2O = L-glutaminyl-tRNA(Gln) + L-glutamate + ADP + phosphate + H(+). Its function is as follows. Allows the formation of correctly charged Gln-tRNA(Gln) through the transamidation of misacylated Glu-tRNA(Gln) in organisms which lack glutaminyl-tRNA synthetase. The reaction takes place in the presence of glutamine and ATP through an activated gamma-phospho-Glu-tRNA(Gln). This chain is Glutamyl-tRNA(Gln) amidotransferase subunit A, found in Synechococcus sp. (strain JA-3-3Ab) (Cyanobacteria bacterium Yellowstone A-Prime).